The primary structure comprises 453 residues: Tryptophan biosynthesis protein TrpCF (453 aa).

The indole-3-glycerol phosphate synthase stretch occupies residues 1–257 (MQDTTLKKII…TAVRSIIFGD (257 aa)). An N-(5'-phosphoribosyl)anthranilate isomerase region spans residues 258–453 (NKVCGLTRSI…KSIFQKLRYG (196 aa)).

It in the N-terminal section; belongs to the TrpC family. This sequence in the C-terminal section; belongs to the TrpF family. As to quaternary structure, monomer.

The enzyme catalyses N-(5-phospho-beta-D-ribosyl)anthranilate = 1-(2-carboxyphenylamino)-1-deoxy-D-ribulose 5-phosphate. The catalysed reaction is 1-(2-carboxyphenylamino)-1-deoxy-D-ribulose 5-phosphate + H(+) = (1S,2R)-1-C-(indol-3-yl)glycerol 3-phosphate + CO2 + H2O. It participates in amino-acid biosynthesis; L-tryptophan biosynthesis; L-tryptophan from chorismate: step 3/5. The protein operates within amino-acid biosynthesis; L-tryptophan biosynthesis; L-tryptophan from chorismate: step 4/5. In terms of biological role, bifunctional enzyme that catalyzes two sequential steps of tryptophan biosynthetic pathway. The first reaction is catalyzed by the isomerase, coded by the TrpF domain; the second reaction is catalyzed by the synthase, coded by the TrpC domain. In Buchnera aphidicola subsp. Acyrthosiphon pisum (strain APS) (Acyrthosiphon pisum symbiotic bacterium), this protein is Tryptophan biosynthesis protein TrpCF (trpC).